A 618-amino-acid chain; its full sequence is Crinkler effector protein 16 (618 aa).

A signal peptide spans 1-19 (MVVVSLQCAIVGQAGSSFD). Residues 18 to 57 (FDVEIDDGAKVSKLKDAIKAKKPNDFKVVDADKLHLFLAK) are LQLFLAK domain. The DWL domain stretch occupies residues 58–139 (QPVEDESGKE…NMELPSSEQI (82 aa)). Positions 140 to 146 (HVLVVVP) match the HVLVXXP motif motif. N534 carries an N-linked (GlcNAc...) asparagine glycan.

Belongs to the Crinkler effector family.

It is found in the secreted. The protein localises to the host nucleus. Secreted effector that elicits necrosis in host plants, a characteristic of plant innate immunity. The chain is Crinkler effector protein 16 from Phytophthora infestans (Potato late blight agent).